The chain runs to 316 residues: MDRIIGLPDEVLVKILSFVPTKVAVSTSILSKRWEFLWMWLTKLKFGSKRYSESEFKRLQCFLDRNLPLHRAPVIESFRLVLSDSHFKPEDIRMWVVVAVSRYIRELKIYSSHYGEKQNILPSSLYTCKSLVILKLDGGVLLDVPRMVCLPSLKTLELKGVRYFKQGSLQRLLCNCPVLEDLFVLLLRCDDIGMFIVIVPSLQRLSLYLSPRCNLEGFVIVLDTPLEYFKLVDRNYDRHPYMIENMPKLTSAYVEVISADLKSLVESITSVKYLTIFSENYDDFVFPWNQPSTVPKCFCPVYKSSPVYKSSPGQNT.

The F-box domain occupies 1 to 47 (MDRIIGLPDEVLVKILSFVPTKVAVSTSILSKRWEFLWMWLTKLKFG).

The polypeptide is F-box protein At4g09920 (Arabidopsis thaliana (Mouse-ear cress)).